A 162-amino-acid polypeptide reads, in one-letter code: Transcription elongation factor GreA (162 aa).

Positions 45–74 form a coiled coil; sequence ENAEYEAAREKQAFIEGRIKELEDMTARAE.

This sequence belongs to the GreA/GreB family.

Necessary for efficient RNA polymerase transcription elongation past template-encoded arresting sites. The arresting sites in DNA have the property of trapping a certain fraction of elongating RNA polymerases that pass through, resulting in locked ternary complexes. Cleavage of the nascent transcript by cleavage factors such as GreA or GreB allows the resumption of elongation from the new 3'terminus. GreA releases sequences of 2 to 3 nucleotides. The sequence is that of Transcription elongation factor GreA from Rickettsia typhi (strain ATCC VR-144 / Wilmington).